The primary structure comprises 938 residues: Protein translocase subunit SecA (938 aa).

ATP contacts are provided by residues glutamine 90, glycine 108 to threonine 112, and aspartate 504.

It belongs to the SecA family. As to quaternary structure, monomer and homodimer. Part of the essential Sec protein translocation apparatus which comprises SecA, SecYEG and auxiliary proteins SecDF. Other proteins may also be involved.

The protein localises to the cell inner membrane. Its subcellular location is the cellular thylakoid membrane. It is found in the cytoplasm. It catalyses the reaction ATP + H2O + cellular proteinSide 1 = ADP + phosphate + cellular proteinSide 2.. Its function is as follows. Part of the Sec protein translocase complex. Interacts with the SecYEG preprotein conducting channel. Has a central role in coupling the hydrolysis of ATP to the transfer of proteins into and across the cell membrane, serving as an ATP-driven molecular motor driving the stepwise translocation of polypeptide chains across the membrane. Probably participates in protein translocation into and across both the cytoplasmic and thylakoid membranes in cyanobacterial cells. This Microcystis aeruginosa (strain NIES-843 / IAM M-2473) protein is Protein translocase subunit SecA.